The sequence spans 73 residues: Ocellatin-PT6 (73 aa).

The signal sequence occupies residues 1 to 22; sequence MAFLKKSLFLVLFLGLVSLSIC. The propeptide occupies 23-39; that stretch reads DEEKRQDEDDDDDDDEE.

In terms of tissue distribution, expressed by the skin glands.

Its subcellular location is the secreted. Its function is as follows. Has antibacterial activity against Gram-negative bacterium E.coli ATCC 25922 (MIC=120 uM) but not against S.pneumoniae ATCC 700603, S.choleraesuis ATCC 14028 or against Gram-positive bacterium S.aureus ATCC 29313. Shows no hemolytic activity and no cytotoxicity. The polypeptide is Ocellatin-PT6 (Leptodactylus pustulatus (Ceara white-lipped frog)).